Here is a 219-residue protein sequence, read N- to C-terminus: ATP synthase delta chain, chloroplastic (219 aa).

The N-terminal 33 residues, 1–33 (MLAAKSIAGPRAFKASAVRAAPKAGRRTVVVMA), are a transit peptide targeting the chloroplast.

This sequence belongs to the ATPase delta chain family. F-type ATPases have 2 components, F(1) - the catalytic core - and F(0) - the membrane proton channel. F(1) has five subunits: alpha(3), beta(3), gamma(1), delta(1), epsilon(1). F(0) has four main subunits: a(1), b(1), b'(1) and c(10-14). The alpha and beta chains form an alternating ring which encloses part of the gamma chain. F(1) is attached to F(0) by a central stalk formed by the gamma and epsilon chains, while a peripheral stalk is formed by the delta, b and b' chains.

The protein resides in the plastid. The protein localises to the chloroplast thylakoid membrane. In terms of biological role, f(1)F(0) ATP synthase produces ATP from ADP in the presence of a proton or sodium gradient. F-type ATPases consist of two structural domains, F(1) containing the extramembraneous catalytic core and F(0) containing the membrane proton channel, linked together by a central stalk and a peripheral stalk. During catalysis, ATP synthesis in the catalytic domain of F(1) is coupled via a rotary mechanism of the central stalk subunits to proton translocation. This protein seems to be part of the stalk that links CF(0) to CF(1). It either transmits conformational changes from CF(0) into CF(1) or is implicated in proton conduction. In Chlamydomonas reinhardtii (Chlamydomonas smithii), this protein is ATP synthase delta chain, chloroplastic.